The chain runs to 163 residues: MAAAVVLAAGLRAARRAVAATGVRGGQVRGAAGVTDGNEVAKAQQATPGGAAPTIFSRILDKSLPADILYEDQQCLVFRDVAPQAPVHFLVIPKKPIPRISQAEEEDQQLLGHLLLVAKQTAKAEGLGDGYRLVINDGKLGAQSVYHLHIHVLGGRQLQWPPG.

Residues 1-17 (MAAAVVLAAGLRAARRA) constitute a mitochondrion transit peptide. The HIT domain occupies 55–163 (IFSRILDKSL…GGRQLQWPPG (109 aa)). AMP contacts are provided by Ser-63 and Asp-80. Lys-119 carries the N6-acetyllysine modification. Asn-136 serves as a coordination point for AMP. Position 139 is an N6-acetyllysine (Lys-139). AMP contacts are provided by residues 142 to 145 (AQSV) and 149 to 151 (HIH). The short motif at 147 to 151 (HLHIH) is the Histidine triad motif element. Catalysis depends on His-149, which acts as the Tele-AMP-histidine intermediate.

The protein belongs to the HINT family. In terms of tissue distribution, high expression in liver and pancreas. Expression is significantly down-regulated in hepatocellular carcinoma (HCC) patients.

It is found in the mitochondrion. The enzyme catalyses adenosine 5'-phosphoramidate + H2O = AMP + NH4(+). Its function is as follows. Exhibits adenosine 5'-monophosphoramidase activity, hydrolyzing purine nucleotide phosphoramidates with a single phosphate group such as adenosine 5'monophosphoramidate (AMP-NH2) to yield AMP and NH2. Hydrolyzes adenosine 5'-O-p-nitrophenylphosphoramidate (AMP-pNA). Hydrolyzes fluorogenic purine nucleoside tryptamine phosphoramidates in vitro. May be involved in steroid biosynthesis. May play a role in apoptosis. The chain is Adenosine 5'-monophosphoramidase HINT2 from Homo sapiens (Human).